Consider the following 702-residue polypeptide: Lipase maturation factor 2 (702 aa).

8 helical membrane-spanning segments follow: residues 10 to 30 (LFLQ…YTQI), 75 to 95 (AQGL…ALLL), 164 to 184 (DLPF…SGVV), 226 to 246 (LSVV…FAPI), 259 to 279 (LLQV…LTLV), 316 to 336 (LLLE…YFGL), 363 to 383 (VTLP…LVVL), and 398 to 418 (AGIQ…ISLV). Asparagine 488 carries an N-linked (GlcNAc...) asparagine glycan. The chain crosses the membrane as a helical span at residues 636-656 (ILLWGLFGAVVAIRVVQTLLA). A disordered region spans residues 660-702 (LQSSKQTREEKRKQTSKKDSRAASEQAAANSNSRDSWAPRRKK). Basic and acidic residues predominate over residues 665 to 681 (QTREEKRKQTSKKDSRA). The span at 682–693 (ASEQAAANSNSR) shows a compositional bias: low complexity.

Belongs to the lipase maturation factor family.

The protein localises to the endoplasmic reticulum membrane. Involved in the maturation of specific proteins in the endoplasmic reticulum. May be required for maturation and transport of active lipoprotein lipase (LPL) through the secretory pathway. The sequence is that of Lipase maturation factor 2 (Lmf2) from Mus musculus (Mouse).